The chain runs to 739 residues: Catalase-peroxidase 2 (739 aa).

A signal peptide spans 1-26; it reads MKKSTIPTLSALTLAMSLAFGGSVIA. A cross-link (tryptophyl-tyrosyl-methioninium (Trp-Tyr) (with M-253)) is located at residues 105-227; the sequence is WHSAGVYRIF…MGATQMGLIY (123 aa). The active-site Proton acceptor is His-106. A cross-link (tryptophyl-tyrosyl-methioninium (Tyr-Met) (with W-105)) is located at residues 227–253; sequence YVNPEGPNGVPDPLASAKEIRDTFGRM. His-268 contributes to the heme b binding site.

Belongs to the peroxidase family. Peroxidase/catalase subfamily. In terms of assembly, homodimer or homotetramer. The cofactor is heme b. Post-translationally, formation of the three residue Trp-Tyr-Met cross-link is important for the catalase, but not the peroxidase activity of the enzyme.

The catalysed reaction is H2O2 + AH2 = A + 2 H2O. It carries out the reaction 2 H2O2 = O2 + 2 H2O. Its function is as follows. Bifunctional enzyme with both catalase and broad-spectrum peroxidase activity. This Shewanella sp. (strain MR-7) protein is Catalase-peroxidase 2.